The chain runs to 186 residues: Chromosomal replication initiator protein DnaA (186 aa).

Residue glutamate 1 is a region of interest, domain I, interacts with DnaA modulators. Glutamate 1 is a region of interest (domain II). Residues 1–99 (EFFKTFNALI…GALNKVTHTS (99 aa)) form a domain III, AAA+ region region. Residues 100–186 (LIGRSMTVES…GRNFGGRDHT (87 aa)) form a domain IV, binds dsDNA region.

It belongs to the DnaA family. In terms of assembly, oligomerizes as a right-handed, spiral filament on DNA at oriC.

Its subcellular location is the cytoplasm. Functionally, plays an essential role in the initiation and regulation of chromosomal replication. ATP-DnaA binds to the origin of replication (oriC) to initiate formation of the DNA replication initiation complex once per cell cycle. Binds the DnaA box (a 9 base pair repeat at the origin) and separates the double-stranded (ds)DNA. Forms a right-handed helical filament on oriC DNA; dsDNA binds to the exterior of the filament while single-stranded (ss)DNA is stabiized in the filament's interior. The ATP-DnaA-oriC complex binds and stabilizes one strand of the AT-rich DNA unwinding element (DUE), permitting loading of DNA polymerase. After initiation quickly degrades to an ADP-DnaA complex that is not apt for DNA replication. Binds acidic phospholipids. This is Chromosomal replication initiator protein DnaA from Wolbachia sp.